The primary structure comprises 629 residues: Pescadillo homolog (629 aa).

The BRCT domain maps to 321-414 (RLRTLFKGLK…QLLPTNKYFI (94 aa)). 3 disordered regions span residues 439 to 470 (KALL…ETVD), 488 to 568 (EYKK…MVKP), and 598 to 629 (IEAS…KLGK). Phosphoserine is present on residues serine 453 and serine 457. Acidic residues-rich tracts occupy residues 454–470 (DEDS…ETVD) and 498–523 (VNED…EELD). Basic and acidic residues predominate over residues 524 to 535 (EKSKRLQEEKQK). Residues 542 to 551 (KVHKVNKRQV) show a composition bias toward basic residues. 2 stretches are compositionally biased toward basic and acidic residues: residues 552–561 (HKAEVDEHRL) and 598–617 (IEAS…RKEA). Positions 584 to 627 (KEKEEWLLRKKRRTIEASEKEARKTAKREARKEAAAAAAKASKL) form a coiled coil. The segment covering 618 to 629 (AAAAAKASKLGK) has biased composition (low complexity).

Belongs to the pescadillo family.

It localises to the nucleus. Its subcellular location is the nucleolus. The protein localises to the nucleoplasm. In terms of biological role, required for maturation of ribosomal RNAs and formation of the large ribosomal subunit. The chain is Pescadillo homolog from Drosophila erecta (Fruit fly).